We begin with the raw amino-acid sequence, 398 residues long: 1-deoxy-D-xylulose 5-phosphate reductoisomerase (398 aa).

Residues Thr-10, Gly-11, Ser-12, Ile-13, Gly-36, Lys-37, Asn-38, and Asn-124 each coordinate NADPH. Residue Lys-125 participates in 1-deoxy-D-xylulose 5-phosphate binding. NADPH is bound at residue Glu-126. Residue Asp-150 participates in Mn(2+) binding. 1-deoxy-D-xylulose 5-phosphate-binding residues include Ser-151, Glu-152, Ser-186, and His-209. Mn(2+) is bound at residue Glu-152. Gly-215 lines the NADPH pocket. 1-deoxy-D-xylulose 5-phosphate is bound by residues Ser-222, Asn-227, Lys-228, and Glu-231. Position 231 (Glu-231) interacts with Mn(2+).

Belongs to the DXR family. In terms of assembly, homodimer. The cofactor is Mg(2+). Mn(2+) serves as cofactor.

It carries out the reaction 2-C-methyl-D-erythritol 4-phosphate + NADP(+) = 1-deoxy-D-xylulose 5-phosphate + NADPH + H(+). It participates in isoprenoid biosynthesis; isopentenyl diphosphate biosynthesis via DXP pathway; isopentenyl diphosphate from 1-deoxy-D-xylulose 5-phosphate: step 1/6. Catalyzes the NADPH-dependent rearrangement and reduction of 1-deoxy-D-xylulose-5-phosphate (DXP) to 2-C-methyl-D-erythritol 4-phosphate (MEP). In Salmonella paratyphi A (strain ATCC 9150 / SARB42), this protein is 1-deoxy-D-xylulose 5-phosphate reductoisomerase.